A 913-amino-acid polypeptide reads, in one-letter code: Striatin-interacting protein homolog (913 aa).

Low complexity-rich tracts occupy residues Gln-177–Glu-188, Thr-195–Thr-204, and Asn-791–Asn-811. Disordered regions lie at residues Gln-177–Thr-204 and Asn-791–Thr-814.

The protein belongs to the STRIP family.

The sequence is that of Striatin-interacting protein homolog (fam40) from Dictyostelium discoideum (Social amoeba).